Consider the following 491-residue polypeptide: Nicotinamide phosphoribosyltransferase (491 aa).

M1 bears the N-acetylmethionine mark. Y188 carries the phosphotyrosine modification. Position 196 (R196) interacts with diphosphate. D219 provides a ligand contact to beta-nicotinamide D-ribonucleotide. Diphosphate-binding residues include H247 and R311. Beta-nicotinamide D-ribonucleotide-binding positions include 311 to 313, 353 to 354, G384, and R392; these read RPD and GD. S472 bears the Phosphoserine mark.

The protein belongs to the NAPRTase family. Homodimer.

Its subcellular location is the nucleus. It localises to the cytoplasm. The protein resides in the secreted. It catalyses the reaction beta-nicotinamide D-ribonucleotide + diphosphate = 5-phospho-alpha-D-ribose 1-diphosphate + nicotinamide + H(+). Its pathway is cofactor biosynthesis; NAD(+) biosynthesis; nicotinamide D-ribonucleotide from 5-phospho-alpha-D-ribose 1-diphosphate and nicotinamide: step 1/1. Catalyzes the condensation of nicotinamide with 5-phosphoribosyl-1-pyrophosphate to yield nicotinamide mononucleotide, an intermediate in the biosynthesis of NAD. It is the rate limiting component in the mammalian NAD biosynthesis pathway. The secreted form behaves both as a cytokine with immunomodulating properties and an adipokine with anti-diabetic properties, it has no enzymatic activity, partly because of lack of activation by ATP, which has a low level in extracellular space and plasma. Plays a role in the modulation of circadian clock function. Plays a role in the modulation of circadian clock function. NAMPT-dependent oscillatory production of NAD regulates oscillation of clock target gene expression by releasing the core clock component: CLOCK-BMAL1 heterodimer from NAD-dependent SIRT1-mediated suppression. The sequence is that of Nicotinamide phosphoribosyltransferase (NAMPT) from Sus scrofa (Pig).